Here is a 671-residue protein sequence, read N- to C-terminus: DNA ligase (671 aa).

Residues 36-40, 85-86, and Glu-116 contribute to the NAD(+) site; these read DAEYD and SL. The active-site N6-AMP-lysine intermediate is Lys-118. Arg-139, Glu-176, Lys-292, and Lys-316 together coordinate NAD(+). Cys-410, Cys-413, Cys-428, and Cys-434 together coordinate Zn(2+). Positions 591–671 constitute a BRCT domain; the sequence is QKGGRFQGMT…QFLAMFSEKE (81 aa).

Belongs to the NAD-dependent DNA ligase family. LigA subfamily. The cofactor is Mg(2+). It depends on Mn(2+) as a cofactor.

It carries out the reaction NAD(+) + (deoxyribonucleotide)n-3'-hydroxyl + 5'-phospho-(deoxyribonucleotide)m = (deoxyribonucleotide)n+m + AMP + beta-nicotinamide D-nucleotide.. Functionally, DNA ligase that catalyzes the formation of phosphodiester linkages between 5'-phosphoryl and 3'-hydroxyl groups in double-stranded DNA using NAD as a coenzyme and as the energy source for the reaction. It is essential for DNA replication and repair of damaged DNA. The chain is DNA ligase from Acidithiobacillus ferrooxidans (strain ATCC 23270 / DSM 14882 / CIP 104768 / NCIMB 8455) (Ferrobacillus ferrooxidans (strain ATCC 23270)).